The primary structure comprises 335 residues: Putative zinc metalloprotease CPE1693 (335 aa).

Histidine 17 is a binding site for Zn(2+). Glutamate 18 is a catalytic residue. A Zn(2+)-binding site is contributed by histidine 21. 3 consecutive transmembrane segments (helical) span residues 88–110 (ILVMGAGAFMNYVLALIIFIGLA), 262–284 (LLWFMAFLSVQLAVFNLLPFPAL), and 312–334 (TVGFMLLMGLMVLVTIKDIIFPI). The PDZ domain maps to 96–174 (FMNYVLALII…PVELEIKRGN (79 aa)).

It belongs to the peptidase M50B family. It depends on Zn(2+) as a cofactor.

It is found in the cell membrane. In Clostridium perfringens (strain 13 / Type A), this protein is Putative zinc metalloprotease CPE1693.